A 694-amino-acid chain; its full sequence is Long-chain-fatty-acid--CoA ligase 3 (694 aa).

Residues 1–25 (MSEQHSVAVGKAANEHETAPRRNVR) form a disordered region. Ser-2 bears the N-acetylserine mark. 269-280 (YTSGSISAPKGV) contributes to the ATP binding site. The short motif at 527 to 576 (DGWFRTGDIVEWTPKGQLKIIDRRKNLVKTLNGEYIALEKLESVYRSNSY) is the FACS element.

This sequence belongs to the ATP-dependent AMP-binding enzyme family. As to quaternary structure, interacts with FRK1. Requires Mg(2+) as cofactor.

It is found in the cell membrane. It catalyses the reaction a long-chain fatty acid + ATP + CoA = a long-chain fatty acyl-CoA + AMP + diphosphate. The enzyme catalyses (9Z)-octadecenoate + ATP + CoA = (9Z)-octadecenoyl-CoA + AMP + diphosphate. It carries out the reaction hexadecanoate + ATP + CoA = hexadecanoyl-CoA + AMP + diphosphate. The catalysed reaction is (9Z)-hexadecenoate + ATP + CoA = (9Z)-hexadecenoyl-CoA + AMP + diphosphate. It catalyses the reaction (9Z)-tetradecenoate + ATP + CoA = (9Z)-tetradecenoyl-CoA + AMP + diphosphate. The enzyme catalyses (9Z,12Z)-octadecadienoate + ATP + CoA = (9Z,12Z)-octadecadienoyl-CoA + AMP + diphosphate. In terms of biological role, activates endogenous long-chain fatty acids (LCFA) by esterification of the fatty acids into metabolically active CoA-thioesters for subsequent degradation or incorporation into phospholipids. Acts preferentially on C16 and C18 fatty acids with a cis-double bond at C-9-C-10. In Saccharomyces cerevisiae (strain ATCC 204508 / S288c) (Baker's yeast), this protein is Long-chain-fatty-acid--CoA ligase 3 (FAA3).